Reading from the N-terminus, the 429-residue chain is Enolase (429 aa).

Gln163 is a (2R)-2-phosphoglycerate binding site. Catalysis depends on Glu205, which acts as the Proton donor. Asp242, Glu286, and Asp313 together coordinate Mg(2+). Residues Lys338, Arg367, Ser368, and Lys389 each contribute to the (2R)-2-phosphoglycerate site. The active-site Proton acceptor is Lys338.

Belongs to the enolase family. Requires Mg(2+) as cofactor.

It is found in the cytoplasm. The protein resides in the secreted. It localises to the cell surface. The catalysed reaction is (2R)-2-phosphoglycerate = phosphoenolpyruvate + H2O. The protein operates within carbohydrate degradation; glycolysis; pyruvate from D-glyceraldehyde 3-phosphate: step 4/5. Catalyzes the reversible conversion of 2-phosphoglycerate (2-PG) into phosphoenolpyruvate (PEP). It is essential for the degradation of carbohydrates via glycolysis. The polypeptide is Enolase (Thermoanaerobacter sp. (strain X514)).